An 873-amino-acid polypeptide reads, in one-letter code: DNA mismatch repair protein MutS (873 aa).

Position 620 to 627 (620 to 627) interacts with ATP; it reads GPNMAGKS.

Belongs to the DNA mismatch repair MutS family.

Functionally, this protein is involved in the repair of mismatches in DNA. It is possible that it carries out the mismatch recognition step. This protein has a weak ATPase activity. This chain is DNA mismatch repair protein MutS, found in Ruminiclostridium cellulolyticum (strain ATCC 35319 / DSM 5812 / JCM 6584 / H10) (Clostridium cellulolyticum).